A 439-amino-acid chain; its full sequence is Cobyrinate a,c-diamide synthase (439 aa).

Positions 214–235 (ETARAPPEVATTERNTGDSPAD) are disordered. Residues 237–428 (RVAVAQDSAF…CHCHGESGAF (192 aa)) form the GATase cobBQ-type domain. The Nucleophile role is filled by Cys-317.

It belongs to the CobB/CbiA family. Mg(2+) serves as cofactor.

It catalyses the reaction cob(II)yrinate + 2 L-glutamine + 2 ATP + 2 H2O = cob(II)yrinate a,c diamide + 2 L-glutamate + 2 ADP + 2 phosphate + 2 H(+). It functions in the pathway cofactor biosynthesis; adenosylcobalamin biosynthesis; cob(II)yrinate a,c-diamide from sirohydrochlorin (anaerobic route): step 10/10. In terms of biological role, catalyzes the ATP-dependent amidation of the two carboxylate groups at positions a and c of cobyrinate, using either L-glutamine or ammonia as the nitrogen source. The sequence is that of Cobyrinate a,c-diamide synthase from Haloarcula marismortui (strain ATCC 43049 / DSM 3752 / JCM 8966 / VKM B-1809) (Halobacterium marismortui).